We begin with the raw amino-acid sequence, 235 residues long: Nitrile hydratase subunit beta (235 aa).

It belongs to the nitrile hydratase subunit beta family. In terms of assembly, heterodimer of an alpha and a beta chain.

The catalysed reaction is an aliphatic primary amide = an aliphatic nitrile + H2O. Functionally, NHase catalyzes the hydration of various nitrile compounds to the corresponding amides. The chain is Nitrile hydratase subunit beta (nthB) from Rhodococcus sp.